The following is a 355-amino-acid chain: F-box protein At1g31080 (355 aa).

One can recognise an F-box domain in the interval 4-49 (GANSASIPNDLILEILSRLPAKSTGRFRCVSKLWGSMLCHSYFTEL). Residues 306-320 (AGTSRSPPKQSTSTS) are compositionally biased toward polar residues. The segment at 306-333 (AGTSRSPPKQSTSTSSREDHEVRTLAHQ) is disordered. Positions 321 to 333 (SREDHEVRTLAHQ) are enriched in basic and acidic residues.

The chain is F-box protein At1g31080 from Arabidopsis thaliana (Mouse-ear cress).